A 117-amino-acid chain; its full sequence is MMIIIFIELCRIADSLLWIPKSSRRTSSISTYLILLPYKKWNPNNYIKIHVLFIWIPKSSRRIYNIVCIHNIIASNDNGILTIIKLPPVPQKDPCIIFIITALLTSNHECSQINLLE.

This is an uncharacterized protein from Saccharomyces cerevisiae (strain ATCC 204508 / S288c) (Baker's yeast).